A 375-amino-acid chain; its full sequence is Alcohol dehydrogenase 4, mitochondrial (375 aa).

The N-terminal 27 residues, 1 to 27 (MFRLARAQTALANKASVSRSFLRLNSS), are a transit peptide targeting the mitochondrion. Cysteine 71, histidine 94, cysteine 125, cysteine 128, cysteine 131, cysteine 139, and cysteine 181 together coordinate Zn(2+). Residues 205–211 (GAAGGLG), aspartate 229, lysine 234, 296–298 (VGL), and arginine 368 contribute to the NAD(+) site.

This sequence belongs to the zinc-containing alcohol dehydrogenase family. Homotetramer. It depends on Zn(2+) as a cofactor.

The protein localises to the mitochondrion matrix. The catalysed reaction is a primary alcohol + NAD(+) = an aldehyde + NADH + H(+). The enzyme catalyses a secondary alcohol + NAD(+) = a ketone + NADH + H(+). The polypeptide is Alcohol dehydrogenase 4, mitochondrial (ADH4) (Kluyveromyces lactis (strain ATCC 8585 / CBS 2359 / DSM 70799 / NBRC 1267 / NRRL Y-1140 / WM37) (Yeast)).